We begin with the raw amino-acid sequence, 417 residues long: Solute carrier family 25 member 46-A (417 aa).

A compositionally biased stretch (basic and acidic residues) spans 1–13 (MQPRRPDRFDGLE). Positions 1 to 90 (MQPRRPDRFD…AFGEENSNSA (90 aa)) are disordered. Low complexity predominate over residues 31 to 41 (SSFPARSFSSS). A Solcar 1 repeat occupies 95-186 (QLNRFAGFGI…GILSEFTHLP (92 aa)). 6 consecutive transmembrane segments (helical) span residues 102–122 (FGIG…CIVL), 162–182 (MGST…LSEF), 198–218 (IGGH…FYSA), 257–277 (LLPL…HYIV), 313–333 (FPEL…LYPL), and 382–402 (LGFY…AIVL). One copy of the Solcar 2 repeat lies at 310–415 (EDYFPELIAN…KIIYSSVVQT (106 aa)).

Belongs to the mitochondrial carrier (TC 2.A.29) family.

The protein resides in the mitochondrion outer membrane. Its function is as follows. May play a role in mitochondrial dynamics by controlling mitochondrial membrane fission. This chain is Solute carrier family 25 member 46-A (slc25a46-a), found in Xenopus laevis (African clawed frog).